The following is a 327-amino-acid chain: MFNETPVFDYEDIQLIPNKCIINSRSEADTTVTLGKYSFKLPVVPANMQTIIDEDVAEMLAKDGYFYIMHRFDEAGRIPFIKRMHEQGLIASISVGVKEYEYEFVTSLKADAPEFITIDIAHGHAESVIKMIQHIKKELPETFVIAGNVGTPEAVRELENAGADATKVGIGPGKVCITKVKTGFGTGGWQLAALRWCAKAARKPIIADGGIRTHGDIAKSIRFGASMVMIGSLFAGHIESPGKTIEVDGEKFKEYYGSASEYQKGAYKNVEGKKILLPAKGHLEDTLVEMEQDLQSSISYAGGRDITSLKHVDYVIVKNSIWNGDSI.

Catalysis depends on Cys-176, which acts as the Thioimidate intermediate. An NADP(+)-binding site is contributed by Ile-205–Val-228.

This sequence belongs to the IMPDH/GMPR family. GuaC type 2 subfamily.

The catalysed reaction is IMP + NH4(+) + NADP(+) = GMP + NADPH + 2 H(+). Functionally, catalyzes the irreversible NADPH-dependent deamination of GMP to IMP. It functions in the conversion of nucleobase, nucleoside and nucleotide derivatives of G to A nucleotides, and in maintaining the intracellular balance of A and G nucleotides. The protein is GMP reductase of Streptococcus suis (strain 05ZYH33).